Here is a 209-residue protein sequence, read N- to C-terminus: tRNA (guanine-N(7)-)-methyltransferase (209 aa).

D35, E60, N87, and D113 together coordinate S-adenosyl-L-methionine. The active site involves D113. Residues K117 and D149 each contribute to the substrate site.

It belongs to the class I-like SAM-binding methyltransferase superfamily. TrmB family.

The enzyme catalyses guanosine(46) in tRNA + S-adenosyl-L-methionine = N(7)-methylguanosine(46) in tRNA + S-adenosyl-L-homocysteine. It participates in tRNA modification; N(7)-methylguanine-tRNA biosynthesis. In terms of biological role, catalyzes the formation of N(7)-methylguanine at position 46 (m7G46) in tRNA. The protein is tRNA (guanine-N(7)-)-methyltransferase of Prochlorococcus marinus subsp. pastoris (strain CCMP1986 / NIES-2087 / MED4).